A 788-amino-acid chain; its full sequence is Bifunctional purine biosynthetic protein ADE1 (788 aa).

The GARS stretch occupies residues 1 to 430 (MEPIIALLIG…DIAHHALNPK (430 aa)). An ATP-grasp domain is found at 115-321 (KDFMHRNNIP…LAEIILACVN (207 aa)). 141–202 (LDTCTFDVVI…EELLEGEELS (62 aa)) is a binding site for ATP. Residues Glu291 and Asn293 each contribute to the Mg(2+) site. Residues 437 to 769 (LTYENSGVSV…TVYRIGQLVD (333 aa)) are AIRS.

In the N-terminal section; belongs to the GARS family. The protein in the C-terminal section; belongs to the AIR synthase family. Mg(2+) serves as cofactor. The cofactor is Mn(2+).

It localises to the cytoplasm. It is found in the cytosol. It catalyses the reaction 5-phospho-beta-D-ribosylamine + glycine + ATP = N(1)-(5-phospho-beta-D-ribosyl)glycinamide + ADP + phosphate + H(+). It carries out the reaction 2-formamido-N(1)-(5-O-phospho-beta-D-ribosyl)acetamidine + ATP = 5-amino-1-(5-phospho-beta-D-ribosyl)imidazole + ADP + phosphate + H(+). It functions in the pathway purine metabolism; IMP biosynthesis via de novo pathway; 5-amino-1-(5-phospho-D-ribosyl)imidazole from N(2)-formyl-N(1)-(5-phospho-D-ribosyl)glycinamide: step 2/2. Its pathway is purine metabolism; IMP biosynthesis via de novo pathway; N(1)-(5-phospho-D-ribosyl)glycinamide from 5-phospho-alpha-D-ribose 1-diphosphate: step 2/2. Catalyzes the second and fifth step in the 'de novo' purine biosynthesis pathway; contains phosphoribosylamine--glycine ligase (GARS) and phosphoribosylformylglycinamidine cyclo-ligase (AIRS) activities. The protein is Bifunctional purine biosynthetic protein ADE1 of Schizosaccharomyces pombe (strain 972 / ATCC 24843) (Fission yeast).